The primary structure comprises 346 residues: Ketol-acid reductoisomerase (NADP(+)) (346 aa).

The KARI N-terminal Rossmann domain occupies 1-141 (KKNSILKKNQ…GAHHAGVLES (141 aa)). Residues S11 and 41 to 43 (DKQ) each bind NADP(+). H65 is an active-site residue. Position 91 (G91) interacts with NADP(+). 2 KARI C-terminal knotted domains span residues 142 to 286 (SFVA…PEQE) and 287 to 346 (YYDH…NKVI). Mg(2+) is bound by residues D150, E154, E322, and E326.

This sequence belongs to the ketol-acid reductoisomerase family. Requires Mg(2+) as cofactor.

It carries out the reaction (2R)-2,3-dihydroxy-3-methylbutanoate + NADP(+) = (2S)-2-acetolactate + NADPH + H(+). The catalysed reaction is (2R,3R)-2,3-dihydroxy-3-methylpentanoate + NADP(+) = (S)-2-ethyl-2-hydroxy-3-oxobutanoate + NADPH + H(+). It participates in amino-acid biosynthesis; L-isoleucine biosynthesis; L-isoleucine from 2-oxobutanoate: step 2/4. Its pathway is amino-acid biosynthesis; L-valine biosynthesis; L-valine from pyruvate: step 2/4. Involved in the biosynthesis of branched-chain amino acids (BCAA). Catalyzes an alkyl-migration followed by a ketol-acid reduction of (S)-2-acetolactate (S2AL) to yield (R)-2,3-dihydroxy-isovalerate. In the isomerase reaction, S2AL is rearranged via a Mg-dependent methyl migration to produce 3-hydroxy-3-methyl-2-ketobutyrate (HMKB). In the reductase reaction, this 2-ketoacid undergoes a metal-dependent reduction by NADPH to yield (R)-2,3-dihydroxy-isovalerate. The sequence is that of Ketol-acid reductoisomerase (NADP(+)) (ilvC) from Buchnera aphidicola subsp. Uroleucon rurale.